The chain runs to 408 residues: Peptidase T (408 aa).

A Zn(2+)-binding site is contributed by His78. Residue Asp80 is part of the active site. Asp140 is a Zn(2+) binding site. Glu174 acts as the Proton acceptor in catalysis. Glu175, Asp197, and His379 together coordinate Zn(2+).

The protein belongs to the peptidase M20B family. It depends on Zn(2+) as a cofactor.

It is found in the cytoplasm. The catalysed reaction is Release of the N-terminal residue from a tripeptide.. In terms of biological role, cleaves the N-terminal amino acid of tripeptides. The protein is Peptidase T of Staphylococcus aureus (strain Mu3 / ATCC 700698).